The following is an 820-amino-acid chain: Pentatricopeptide repeat-containing protein At3g22150, chloroplastic (820 aa).

Positions 1-42 (MAGSALPLPPPPPLSLQSPSQNQTRHSSTFSPPTLTPQTPSI) are disordered. Residues 1–50 (MAGSALPLPPPPPLSLQSPSQNQTRHSSTFSPPTLTPQTPSIRSRLSKIC) constitute a chloroplast transit peptide. The segment covering 22-42 (NQTRHSSTFSPPTLTPQTPSI) has biased composition (polar residues). PPR repeat units follow at residues 69–99 (TTVLWNTIIIGFICNNLPHEALLFYSRMKKT), 106–136 (DAYTYSSTLKACAETKNLKAGKAVHCHLIRC), 141–177 (SRVVHNSLMNMYVSCLNAPDCFEYDVVRKVFDNMRRK), 178–212 (NVVAWNTLISWYVKTGRNAEACRQFGIMMRMEVKP), 213–247 (SPVSFVNVFPAVSISRSIKKANVFYGLMLKLGDEY), 250–284 (DLFVVSSAISMYAELGDIESSRRVFDSCVERNIEV), 285–316 (WNTMIGVYVQNDCLVESIELFLEAIGSKEIVS), 317–347 (DEVTYLLAASAVSALQQVELGRQFHGFVSKN), 352–382 (PIVIVNSLMVMYSRCGSVHKSFGVFLSMRER), 383–417 (DVVSWNTMISAFVQNGLDDEGLMLVYEMQKQGFKI), 418–452 (DYITVTALLSAASNLRNKEIGKQTHAFLIRQGIQF), 485–519 (DQATWNSMISGYTQNGHTEKTFLVFRKMLEQNIRP), 520–550 (NAVTVASILPACSQIGSVDLGKQLHGFSIRQ), 555–585 (NVFVASALVDMYSKAGAIKYAEDMFSQTKER), 586–620 (NSVTYTTMILGYGQHGMGERAISLFLSMQESGIKP), 621–651 (DAITFVAVLSACSYSGLIDEGLKIFEEMREV), and 657–691 (SSEHYCCITDMLGRVGRVNEAYEFVKGLGEEGNIA). The segment at 693–770 (LWGSLLGSCK…EVGRSGIEIA (78 aa)) is type E motif. Residues 771–801 (GYVNCFVSRDQEHPHSSEIYDVIDGLAKDMR) form a type E(+) motif region.

It belongs to the PPR family. PCMP-E subfamily.

It localises to the plastid. Its subcellular location is the chloroplast. The chain is Pentatricopeptide repeat-containing protein At3g22150, chloroplastic (PCMP-E95) from Arabidopsis thaliana (Mouse-ear cress).